The sequence spans 105 residues: Small ribosomal subunit protein uS10 (105 aa).

This sequence belongs to the universal ribosomal protein uS10 family. Part of the 30S ribosomal subunit.

Involved in the binding of tRNA to the ribosomes. The protein is Small ribosomal subunit protein uS10 of Roseobacter denitrificans (strain ATCC 33942 / OCh 114) (Erythrobacter sp. (strain OCh 114)).